A 249-amino-acid chain; its full sequence is uncharacterized protein (249 aa).

A run of 2 helical transmembrane segments spans residues 49–69 (ILLS…CYLL) and 223–243 (IVMS…VHHL).

Its subcellular location is the cell membrane. This is an uncharacterized protein from Bacillus anthracis.